The following is a 410-amino-acid chain: Aspartic proteinase Asp1 (410 aa).

The first 23 residues, 1 to 23, serve as a signal peptide directing secretion; it reads MTARLALLASLLLLLQLVPPSSA. The propeptide at 24 to 46 is removed in mature form; sequence VVLELHGNVYPIGHFFVTMNIGD. One can recognise a Peptidase A1 domain in the interval 38-392; the sequence is FFVTMNIGDP…DSERSLLGWV (355 aa). Residues aspartate 56 and aspartate 257 contribute to the active site.

This sequence belongs to the peptidase A1 family. As to expression, expressed in pollen, nucellus, ovary wall, shoot and root meristem, coleoptiles of immature seeds, and somatic embryos.

Possesses protease activity in vitro. In Oryza sativa subsp. indica (Rice), this protein is Aspartic proteinase Asp1 (ASP1).